Here is a 451-residue protein sequence, read N- to C-terminus: 3-carboxy-cis,cis-muconate cycloisomerase (451 aa).

This sequence belongs to the class-II fumarase/aspartase family. As to quaternary structure, homotetramer.

It carries out the reaction 2-(carboxymethyl)-5-oxo-2,5-dihydro-2-furoate = 3-carboxy-cis,cis-muconate + H(+). It participates in aromatic compound metabolism; beta-ketoadipate pathway; 5-oxo-4,5-dihydro-2-furylacetate from 3-carboxy-cis,cis-muconate: step 1/2. In terms of biological role, catalyzes an anti cycloisomerization. In Acinetobacter baylyi (strain ATCC 33305 / BD413 / ADP1), this protein is 3-carboxy-cis,cis-muconate cycloisomerase (pcaB).